A 1184-amino-acid chain; its full sequence is DNA-directed RNA polymerase subunit beta (1184 aa).

The segment at 1160–1184 (DDDFTNQNDAFNIVQPENAAAEKTE) is disordered.

The protein belongs to the RNA polymerase beta chain family. As to quaternary structure, the RNAP catalytic core consists of 2 alpha, 1 beta, 1 beta' and 1 omega subunit. When a sigma factor is associated with the core the holoenzyme is formed, which can initiate transcription.

The enzyme catalyses RNA(n) + a ribonucleoside 5'-triphosphate = RNA(n+1) + diphosphate. Its function is as follows. DNA-dependent RNA polymerase catalyzes the transcription of DNA into RNA using the four ribonucleoside triphosphates as substrates. In Listeria monocytogenes serotype 4b (strain F2365), this protein is DNA-directed RNA polymerase subunit beta.